Consider the following 260-residue polypeptide: uncharacterized protein (260 aa).

This is an uncharacterized protein from Bacillus subtilis (strain 168).